The sequence spans 233 residues: MKTLVICSGGLDSVSLAHITSQKYQLTRLVSFDYGQRHRKELDFARAAATRLGVPFHLIDMRSIGGALSGSALTDDIDVPDGHYAEDTMRITVVPNRNAIMLAIGFGVAAAQGDEAVATAVHGGDHFIYPDCRPGFTRAFETMQRAALDGYADVRLHTPFVEQSKADIVRAGAAHNTPFAETWSCYKGGDIHCGRCGTCVERREAFHLAEVADPTVYADPDYWSAAIAGREAE.

Residue 7-17 (CSGGLDSVSLA) participates in ATP binding. The Zn(2+) site is built by Cys-185, Cys-193, Cys-196, and Cys-199.

It belongs to the QueC family. It depends on Zn(2+) as a cofactor.

The enzyme catalyses 7-carboxy-7-deazaguanine + NH4(+) + ATP = 7-cyano-7-deazaguanine + ADP + phosphate + H2O + H(+). The protein operates within purine metabolism; 7-cyano-7-deazaguanine biosynthesis. Functionally, catalyzes the ATP-dependent conversion of 7-carboxy-7-deazaguanine (CDG) to 7-cyano-7-deazaguanine (preQ(0)). This Ruegeria sp. (strain TM1040) (Silicibacter sp.) protein is 7-cyano-7-deazaguanine synthase.